The chain runs to 375 residues: Phosphoribulokinase, chloroplastic (375 aa).

A chloroplast-targeting transit peptide spans 1-31 (MAFTMRAPAPRATAQSRVTANRARRSLVVRA). A disulfide bond links cysteine 47 and cysteine 86.

This sequence belongs to the phosphoribulokinase family. As to quaternary structure, component of a complex that contains two dimers of PRK, two tetramers of GAPDH and CP12.

It is found in the plastid. It localises to the chloroplast. It carries out the reaction D-ribulose 5-phosphate + ATP = D-ribulose 1,5-bisphosphate + ADP + H(+). Its pathway is carbohydrate biosynthesis; Calvin cycle. Light regulated via thioredoxin by reversible oxidation/reduction of sulfhydryl/disulfide groups. This is Phosphoribulokinase, chloroplastic (PRKA) from Chlamydomonas reinhardtii (Chlamydomonas smithii).